The sequence spans 497 residues: Cysteine-rich secretory protein LCCL domain-containing 2 (497 aa).

The signal sequence occupies residues 1 to 22 (MSCVLGGVIPLGLLFLVCGSQG). Asparagine 27 carries N-linked (GlcNAc...) asparagine glycosylation. The SCP domain maps to 62–200 (LHNKLRGQVQ…ENAVYFVCNY (139 aa)). LCCL domains are found at residues 284 to 379 (MTQV…SSSF) and 385 to 488 (KVQD…RDGK). Intrachain disulfides connect cysteine 290/cysteine 308, cysteine 312/cysteine 332, cysteine 391/cysteine 413, and cysteine 417/cysteine 440.

It belongs to the CRISP family. As to quaternary structure, binds to heparin, dermatan sulfate and chondroitin sulfate.

The protein localises to the secreted. Functionally, promotes matrix assembly. In Homo sapiens (Human), this protein is Cysteine-rich secretory protein LCCL domain-containing 2 (CRISPLD2).